The following is a 161-amino-acid chain: Cyclic pyranopterin monophosphate synthase (161 aa).

Substrate contacts are provided by residues 75–77 (MCH) and 115–116 (ME). The active site involves aspartate 130.

This sequence belongs to the MoaC family. Homohexamer; trimer of dimers.

It catalyses the reaction (8S)-3',8-cyclo-7,8-dihydroguanosine 5'-triphosphate = cyclic pyranopterin phosphate + diphosphate. It functions in the pathway cofactor biosynthesis; molybdopterin biosynthesis. Its function is as follows. Catalyzes the conversion of (8S)-3',8-cyclo-7,8-dihydroguanosine 5'-triphosphate to cyclic pyranopterin monophosphate (cPMP). The sequence is that of Cyclic pyranopterin monophosphate synthase from Bacillus thuringiensis subsp. konkukian (strain 97-27).